A 1017-amino-acid chain; its full sequence is Voltage-gated delayed rectifier potassium channel KCNH4 (1017 aa).

The Cytoplasmic portion of the chain corresponds to 1–232; that stretch reads MPVMKGLLAP…YSIPKAVWDG (232 aa). The PAS domain maps to 14–90; sequence FLDTIATRFD…QRLQKALEGH (77 aa). Positions 93 to 145 constitute a PAC domain; it reads HRAEICFYRKDGSAFWCLLDMMPIKNELGEVVLFLFSFKDISQSGGPGLGSPG. The tract at residues 139 to 170 is disordered; it reads PGLGSPGIHGDNNNHENSLGRRGASSRLRSTR. Residues 233–253 traverse the membrane as a helical segment; sequence LILLATFYVAVTVPYNVCFAG. Residues 254 to 262 lie on the Extracellular side of the membrane; sequence DDDTPITSR. Residues 263-283 traverse the membrane as a helical segment; sequence HTLVSDIAVEMLFILDIILNF. At 284–305 the chain is on the cytoplasmic side; sequence RTTYVSQSGQVVSAPRSIGLHY. A helical transmembrane segment spans residues 306-326; the sequence is LATWFFVDLIAALPFDLLYVF. At 327-334 the chain is on the extracellular side; that stretch reads NITVTSLV. The chain crosses the membrane as a helical; Voltage-sensor span at residues 335–355; it reads HLLKTVRLLRLLRLLQKLERY. Topologically, residues 356–364 are cytoplasmic; the sequence is SQCSAVVLT. The helical transmembrane segment at 365–385 threads the bilayer; it reads LLMSVFALLAHWMACVWYVIG. The Extracellular segment spans residues 386 to 427; sequence RREMEANDPLLWDIGWLHELGKRLEEPYVNGSAGGPSRRSAY. Residue N415 is glycosylated (N-linked (GlcNAc...) asparagine). An intramembrane region (pore-forming) is located at residues 428–448; sequence IAALYFTLSSLTSVGFGNVCA. The Selectivity filter motif lies at 440–445; that stretch reads SVGFGN. Residues 449–454 lie on the Extracellular side of the membrane; that stretch reads NTDAEK. Residues 455-475 traverse the membrane as a helical segment; it reads IFSICTMLIGALMHAVVFGNV. Residues 476 to 1017 lie on the Cytoplasmic side of the membrane; the sequence is TAIIQRMYSR…SFQSGSDTFH (542 aa). The tract at residues 557–621 is cNMP-binding domain; sequence LFGAASRGCL…AILGKGDLIG (65 aa). Disordered stretches follow at residues 690-749 and 771-870; these read GSEN…PNLS and LVSS…ELAT. Residues 703–726 show a composition bias toward polar residues; it reads PRLSQARSDTLGSSSDKTLPSITE. Low complexity-rich tracts occupy residues 771 to 786 and 806 to 820; these read LVSS…PALA and PPQL…FGPP. Positions 873–907 form a coiled coil; that stretch reads AEEVKEKVCRLNQEISRLNQEVSQLSRELRQVMGL. The segment at 972–1017 is disordered; that stretch reads SELRSSMVPPFPSEPDPLGPSPVPEASPLTPSLLKHSFQSGSDTFH. The segment covering 980-996 has biased composition (pro residues); the sequence is PPFPSEPDPLGPSPVPE. Positions 1008–1017 are enriched in polar residues; sequence SFQSGSDTFH.

It belongs to the potassium channel family. H (Eag) (TC 1.A.1.20) subfamily. Kv12.3/KCNH4 sub-subfamily. In terms of assembly, the potassium channel is probably composed of a homo- or heterotetrameric complex of pore-forming alpha subunits that can associate with modulating beta subunits. In terms of tissue distribution, highly expressed in adult testis, and in adult and embryonic brain. In adult brain found in piriform cortex, olfactory tubercle, cerebral cortex, hippocampus pyramidial cells and dentate gyrus and basal ganglia of caudate/putamen and accumbens nucleus. Detected at intermediate levels in lung, spinal cord, and pituitary.

The protein localises to the membrane. The catalysed reaction is K(+)(in) = K(+)(out). In terms of biological role, pore-forming (alpha) subunit of a voltage-gated delayed rectifier. Activates at more negative voltages, exhibits fast prepulse-independent activation kinetics and deactivates much more slowly, but shows no inactivation. This is Voltage-gated delayed rectifier potassium channel KCNH4 from Rattus norvegicus (Rat).